Reading from the N-terminus, the 532-residue chain is D-arabinono-1,4-lactone oxidase (532 aa).

Positions 25-199 (YSARPRLYFQ…VRATIRVVPA (175 aa)) constitute an FAD-binding PCMH-type domain. Histidine 62 bears the Pros-8alpha-FAD histidine mark.

This sequence belongs to the oxygen-dependent FAD-linked oxidoreductase family. FAD is required as a cofactor.

It localises to the mitochondrion membrane. It catalyses the reaction D-arabinono-1,4-lactone + O2 = dehydro-D-arabinono-1,4-lactone + H2O2 + H(+). The protein operates within cofactor biosynthesis; D-erythroascorbate biosynthesis; dehydro-D-arabinono-1,4-lactone from D-arabinose: step 2/2. The sequence is that of D-arabinono-1,4-lactone oxidase (ALO1) from Eremothecium gossypii (strain ATCC 10895 / CBS 109.51 / FGSC 9923 / NRRL Y-1056) (Yeast).